Consider the following 154-residue polypeptide: Myoglobin (154 aa).

The Globin domain maps to 2–148 (GLSDGEWQLV…FRNEMAAQYK (147 aa)). Ser4 bears the Phosphoserine mark. Nitrite is bound at residue His65. Residue His65 coordinates O2. At Thr68 the chain carries Phosphothreonine. His94 is a heme b binding site.

As to quaternary structure, monomeric.

It is found in the cytoplasm. It localises to the sarcoplasm. The catalysed reaction is Fe(III)-heme b-[protein] + nitric oxide + H2O = Fe(II)-heme b-[protein] + nitrite + 2 H(+). It carries out the reaction H2O2 + AH2 = A + 2 H2O. Functionally, monomeric heme protein which primary function is to store oxygen and facilitate its diffusion within muscle tissues. Reversibly binds oxygen through a pentacoordinated heme iron and enables its timely and efficient release as needed during periods of heightened demand. Depending on the oxidative conditions of tissues and cells, and in addition to its ability to bind oxygen, it also has a nitrite reductase activity whereby it regulates the production of bioactive nitric oxide. Under stress conditions, like hypoxia and anoxia, it also protects cells against reactive oxygen species thanks to its pseudoperoxidase activity. This is Myoglobin from Bubalus bubalis (Domestic water buffalo).